We begin with the raw amino-acid sequence, 103 residues long: Small ribosomal subunit protein uS10 (103 aa).

The protein belongs to the universal ribosomal protein uS10 family. In terms of assembly, part of the 30S ribosomal subunit.

In terms of biological role, involved in the binding of tRNA to the ribosomes. In Pelodictyon phaeoclathratiforme (strain DSM 5477 / BU-1), this protein is Small ribosomal subunit protein uS10.